Reading from the N-terminus, the 157-residue chain is NADPH-dependent 7-cyano-7-deazaguanine reductase (157 aa).

Cys55 (thioimide intermediate) is an active-site residue. Asp62 functions as the Proton donor in the catalytic mechanism. Substrate contacts are provided by residues Val77–Ser79 and His96–Glu97.

This sequence belongs to the GTP cyclohydrolase I family. QueF type 1 subfamily.

It is found in the cytoplasm. The enzyme catalyses 7-aminomethyl-7-carbaguanine + 2 NADP(+) = 7-cyano-7-deazaguanine + 2 NADPH + 3 H(+). Its pathway is tRNA modification; tRNA-queuosine biosynthesis. Catalyzes the NADPH-dependent reduction of 7-cyano-7-deazaguanine (preQ0) to 7-aminomethyl-7-deazaguanine (preQ1). The sequence is that of NADPH-dependent 7-cyano-7-deazaguanine reductase from Neisseria meningitidis serogroup A / serotype 4A (strain DSM 15465 / Z2491).